A 380-amino-acid polypeptide reads, in one-letter code: Cytochrome b (380 aa).

The next 4 membrane-spanning stretches (helical) occupy residues 34–54 (FGSLLALCLVTQILTGLLLAM), 78–99 (WLIRNMHANGASFFFICIYMHI), 114–134 (WNTGVLLLLTLMATAFVGYVL), and 179–199 (FFALHFLLPFMIAGLTLIHLT). Residues H84 and H98 each contribute to the heme b site. Heme b is bound by residues H183 and H197. H202 is an a ubiquinone binding site. Transmembrane regions (helical) follow at residues 227–247 (LKDILGLALLLLPLTAMALFS), 289–309 (LGGVLALAASVLVLLLCPFLH), 321–341 (LSQSLFWILVANLLILTWIGS), and 348–368 (FIIIGQLASTTYFIILLILFP).

Belongs to the cytochrome b family. In terms of assembly, the cytochrome bc1 complex contains 11 subunits: 3 respiratory subunits (MT-CYB, CYC1 and UQCRFS1), 2 core proteins (UQCRC1 and UQCRC2) and 6 low-molecular weight proteins (UQCRH/QCR6, UQCRB/QCR7, UQCRQ/QCR8, UQCR10/QCR9, UQCR11/QCR10 and a cleavage product of UQCRFS1). This cytochrome bc1 complex then forms a dimer. Heme b serves as cofactor.

The protein localises to the mitochondrion inner membrane. In terms of biological role, component of the ubiquinol-cytochrome c reductase complex (complex III or cytochrome b-c1 complex) that is part of the mitochondrial respiratory chain. The b-c1 complex mediates electron transfer from ubiquinol to cytochrome c. Contributes to the generation of a proton gradient across the mitochondrial membrane that is then used for ATP synthesis. This is Cytochrome b (MT-CYB) from Oceanodroma tristrami (Tristram's storm-petrel).